The chain runs to 155 residues: Endoribonuclease YbeY (155 aa).

Positions 114, 118, and 124 each coordinate Zn(2+).

It belongs to the endoribonuclease YbeY family. The cofactor is Zn(2+).

The protein localises to the cytoplasm. In terms of biological role, single strand-specific metallo-endoribonuclease involved in late-stage 70S ribosome quality control and in maturation of the 3' terminus of the 16S rRNA. The chain is Endoribonuclease YbeY from Baumannia cicadellinicola subsp. Homalodisca coagulata.